An 81-amino-acid polypeptide reads, in one-letter code: X antigen family member 1 (81 aa).

Lys12 participates in a covalent cross-link: Glycyl lysine isopeptide (Lys-Gly) (interchain with G-Cter in SUMO2). Phosphoserine is present on Ser20. Residues Lys61 and Lys65 each participate in a glycyl lysine isopeptide (Lys-Gly) (interchain with G-Cter in SUMO2) cross-link.

The protein belongs to the GAGE family. As to expression, in normal tissues, highly expressed in testis. Expressed also in many different types of cancers: highly expressed in breast cancer, prostate cancer and many types of lung cancers, including squamous cell carcinoma, small cell carcinoma, non-small cell carcinoma, and adenocarcinoma, as well as in Ewing's cell lines, in some Ewing's sarcoma patient samples, and in one of one alveolar rhabdomyosarcoma patient sample.

The polypeptide is X antigen family member 1 (Homo sapiens (Human)).